A 449-amino-acid polypeptide reads, in one-letter code: PC-esterase domain-containing protein 1A (449 aa).

Belongs to the PC-esterase family.

This chain is PC-esterase domain-containing protein 1A (Pced1a), found in Mus musculus (Mouse).